Consider the following 307-residue polypeptide: Protoheme IX farnesyltransferase (307 aa).

Transmembrane regions (helical) follow at residues 32–52 (MGIV…ALHF), 65–85 (FFTI…NNYI), 108–128 (PGFA…FLLL), 131–151 (PMAV…YSLW), 158–178 (LNTV…WAAI), 186–206 (IAWM…LALA), 251–271 (LGIT…VLGF), and 287–307 (FVYS…VTFF).

This sequence belongs to the UbiA prenyltransferase family. Protoheme IX farnesyltransferase subfamily. As to quaternary structure, interacts with CtaA.

The protein resides in the cell membrane. The catalysed reaction is heme b + (2E,6E)-farnesyl diphosphate + H2O = Fe(II)-heme o + diphosphate. The protein operates within porphyrin-containing compound metabolism; heme O biosynthesis; heme O from protoheme: step 1/1. Functionally, converts heme B (protoheme IX) to heme O by substitution of the vinyl group on carbon 2 of heme B porphyrin ring with a hydroxyethyl farnesyl side group. This Bacillus cereus (strain ATCC 10987 / NRS 248) protein is Protoheme IX farnesyltransferase.